The following is a 190-amino-acid chain: TATA box-binding protein-like 1 (190 aa).

This sequence belongs to the TBP family. In terms of assembly, binds TFIIA and TFIIB.

It is found in the cytoplasm. Its subcellular location is the nucleus. Part of a specialized transcription system that mediates the transcription of most ribosomal proteins through the 5'-TCT-3' motif which is a core promoter element at these genes. Seems to also mediate the transcription of NF1. Does not bind the TATA box. The polypeptide is TATA box-binding protein-like 1 (TBPL1) (Pongo abelii (Sumatran orangutan)).